A 569-amino-acid polypeptide reads, in one-letter code: Isochorismate synthase 1, chloroplastic (569 aa).

The N-terminal 45 residues, 1-45 (MASLQFSSQFLGSNTKTHSSIISISRSYSPTPFTRFSRKKYESCS), are a transit peptide targeting the chloroplast.

The protein belongs to the isochorismate synthase family. In terms of assembly, monomer. Mg(2+) is required as a cofactor. In terms of tissue distribution, leaves.

The protein localises to the plastid. It is found in the chloroplast. It catalyses the reaction chorismate = isochorismate. It participates in siderophore biosynthesis; salicylate biosynthesis. Isochorismate synthase involved in the synthesis of salicylic acid (SA) required for both local and systemic acquired resistance (LAR and SAR) while SA synthesized through the phenylalanine ammonium lyase (PAL) pathway seems to potentiate plant cell death. Also involved in phylloquinone (vitamin K1) synthesis. Has no isochorismate pyruvate lyase (IPL) activity. The chain is Isochorismate synthase 1, chloroplastic (ICS1) from Arabidopsis thaliana (Mouse-ear cress).